A 655-amino-acid polypeptide reads, in one-letter code: 1-deoxy-D-xylulose-5-phosphate synthase (655 aa).

Residues His-73 and 114–116 (SHA) contribute to the thiamine diphosphate site. A Mg(2+)-binding site is contributed by Asp-145. Residues 146–147 (GA), Asn-174, Tyr-285, and Glu-367 contribute to the thiamine diphosphate site. Asn-174 provides a ligand contact to Mg(2+). Residues 626–655 (RQPAIEDDPTSPGEAAPAGERAGEAIGDQR) are disordered. Residues 646–655 (RAGEAIGDQR) show a composition bias toward basic and acidic residues.

Belongs to the transketolase family. DXPS subfamily. Homodimer. Mg(2+) is required as a cofactor. It depends on thiamine diphosphate as a cofactor.

It carries out the reaction D-glyceraldehyde 3-phosphate + pyruvate + H(+) = 1-deoxy-D-xylulose 5-phosphate + CO2. It participates in metabolic intermediate biosynthesis; 1-deoxy-D-xylulose 5-phosphate biosynthesis; 1-deoxy-D-xylulose 5-phosphate from D-glyceraldehyde 3-phosphate and pyruvate: step 1/1. Its function is as follows. Catalyzes the acyloin condensation reaction between C atoms 2 and 3 of pyruvate and glyceraldehyde 3-phosphate to yield 1-deoxy-D-xylulose-5-phosphate (DXP). The polypeptide is 1-deoxy-D-xylulose-5-phosphate synthase (Frankia casuarinae (strain DSM 45818 / CECT 9043 / HFP020203 / CcI3)).